A 438-amino-acid chain; its full sequence is 2-(3-amino-3-carboxypropyl)histidine synthase subunit 1 (438 aa).

Residues serine 7 to alanine 29 are disordered. The [4Fe-4S] cluster site is built by cysteine 110, cysteine 214, and cysteine 342. The tract at residues valine 391–valine 421 is disordered.

The protein belongs to the DPH1/DPH2 family. DPH1 subfamily. As to quaternary structure, component of the 2-(3-amino-3-carboxypropyl)histidine synthase complex composed of DPH1, DPH2, DPH3 and a NADH-dependent reductase. Interacts with DPH2. Interacts with RBM8A. The cofactor is [4Fe-4S] cluster. Expressed in heart, brain, placenta, lung, liver, skeletal muscle, kidney, pancreas, spleen, thymus, mammary gland, colon, small intestine, testis and ovary. Reduced expression in primary breast and ovarian tumors.

The protein localises to the nucleus. Its subcellular location is the cytoplasm. The enzyme catalyses L-histidyl-[translation elongation factor 2] + S-adenosyl-L-methionine = 2-[(3S)-amino-3-carboxypropyl]-L-histidyl-[translation elongation factor 2] + S-methyl-5'-thioadenosine + H(+). The protein operates within protein modification; peptidyl-diphthamide biosynthesis. In terms of biological role, catalyzes the first step of diphthamide biosynthesis, a post-translational modification of histidine which occurs in elongation factor 2. DPH1 and DPH2 transfer a 3-amino-3-carboxypropyl (ACP) group from S-adenosyl-L-methionine (SAM) to a histidine residue, the reaction is assisted by a reduction system comprising DPH3 and a NADH-dependent reductase. Acts as a tumor suppressor. The protein is 2-(3-amino-3-carboxypropyl)histidine synthase subunit 1 of Homo sapiens (Human).